The following is a 501-amino-acid chain: ATP synthase subunit alpha (501 aa).

Residue Gly169 to Thr176 coordinates ATP.

The protein belongs to the ATPase alpha/beta chains family. As to quaternary structure, F-type ATPases have 2 components, CF(1) - the catalytic core - and CF(0) - the membrane proton channel. CF(1) has five subunits: alpha(3), beta(3), gamma(1), delta(1), epsilon(1). CF(0) has three main subunits: a(1), b(2) and c(9-12). The alpha and beta chains form an alternating ring which encloses part of the gamma chain. CF(1) is attached to CF(0) by a central stalk formed by the gamma and epsilon chains, while a peripheral stalk is formed by the delta and b chains.

The protein localises to the cell inner membrane. It catalyses the reaction ATP + H2O + 4 H(+)(in) = ADP + phosphate + 5 H(+)(out). In terms of biological role, produces ATP from ADP in the presence of a proton gradient across the membrane. The alpha chain is a regulatory subunit. This is ATP synthase subunit alpha from Campylobacter lari (strain RM2100 / D67 / ATCC BAA-1060).